The chain runs to 447 residues: Crotonyl-CoA reductase (447 aa).

The protein belongs to the zinc-containing alcohol dehydrogenase family. Crotonyl-CoA carboxylase/reductase subfamily. As to quaternary structure, homodimer.

The catalysed reaction is butanoyl-CoA + NADP(+) = (2E)-butenoyl-CoA + NADPH + H(+). With respect to regulation, inhibited by divalent cations (30-100%), beta-chloromercuribenzoate (85%), iodoacetamide (40%) and N-ethylmaleamide (80%). The presence of CoA thioesters containing 12-20 carbon atoms results in inhibition of enzyme activity. The greatest degree of inhibition is observed in the presence of palmitoyl-CoA and myristoyl-CoA. The branched-chain fatty acids, isopalmitoyl-CoA and isomyristoyl-CoA are less effective inhibitors of the crotonyl-CoA reductase. Concentrations of NADPH above 200 uM lead to inhibition of enzyme activity. In terms of biological role, may play a role in supplying butyryl-CoA for straight-chain fatty acid biosynthesis. Catalyzes the conversion of crotonyl-CoA to butyryl-CoA. It shows a high substrate specificity for crotonyl-CoA, a short-chain-length (C4), but no measurable activity is observed with shorter (C3) or longer-chain-length enoyl-CoA thioesters. This chain is Crotonyl-CoA reductase (ccr), found in Streptomyces collinus.